The sequence spans 561 residues: Urocanate hydratase (561 aa).

NAD(+) is bound by residues 52 to 53, glutamine 130, 176 to 178, glutamate 196, arginine 201, 242 to 243, 263 to 267, 273 to 274, and tyrosine 322; these read GG, GMG, NA, QTSAH, and YL. The active site involves cysteine 410. Residue glycine 492 coordinates NAD(+).

This sequence belongs to the urocanase family. Requires NAD(+) as cofactor.

It localises to the cytoplasm. It catalyses the reaction 4-imidazolone-5-propanoate = trans-urocanate + H2O. Its pathway is amino-acid degradation; L-histidine degradation into L-glutamate; N-formimidoyl-L-glutamate from L-histidine: step 2/3. Catalyzes the conversion of urocanate to 4-imidazolone-5-propionate. This chain is Urocanate hydratase, found in Citrobacter koseri (strain ATCC BAA-895 / CDC 4225-83 / SGSC4696).